A 197-amino-acid chain; its full sequence is Probable UbiX-like flavin prenyltransferase (197 aa).

FMN-binding positions include 9-11 (GAT), serine 36, 87-90 (SMKT), and arginine 122.

The protein belongs to the UbiX/PAD1 family. YclB subfamily. Homododecamer.

It carries out the reaction dimethylallyl phosphate + FMNH2 = prenylated FMNH2 + phosphate. Functionally, flavin prenyltransferase that catalyzes the synthesis of the prenylated FMN cofactor (prenyl-FMN) for phenolic acid decarboxylase C. Involved in the decarboxylation and detoxification of phenolic derivatives under both aerobic and anaerobic conditions. The chain is Probable UbiX-like flavin prenyltransferase (ecdB) from Escherichia coli O111:H-.